A 216-amino-acid polypeptide reads, in one-letter code: Phosphoribosylformylglycinamidine synthase subunit PurQ (216 aa).

In terms of domain architecture, Glutamine amidotransferase type-1 spans 2–216; that stretch reads SIGVIVFPGS…GRRMLEALLG (215 aa). The active-site Nucleophile is cysteine 86. Residues histidine 193 and glutamate 195 contribute to the active site.

As to quaternary structure, part of the FGAM synthase complex composed of 1 PurL, 1 PurQ and 2 PurS subunits.

Its subcellular location is the cytoplasm. It catalyses the reaction N(2)-formyl-N(1)-(5-phospho-beta-D-ribosyl)glycinamide + L-glutamine + ATP + H2O = 2-formamido-N(1)-(5-O-phospho-beta-D-ribosyl)acetamidine + L-glutamate + ADP + phosphate + H(+). The enzyme catalyses L-glutamine + H2O = L-glutamate + NH4(+). The protein operates within purine metabolism; IMP biosynthesis via de novo pathway; 5-amino-1-(5-phospho-D-ribosyl)imidazole from N(2)-formyl-N(1)-(5-phospho-D-ribosyl)glycinamide: step 1/2. Part of the phosphoribosylformylglycinamidine synthase complex involved in the purines biosynthetic pathway. Catalyzes the ATP-dependent conversion of formylglycinamide ribonucleotide (FGAR) and glutamine to yield formylglycinamidine ribonucleotide (FGAM) and glutamate. The FGAM synthase complex is composed of three subunits. PurQ produces an ammonia molecule by converting glutamine to glutamate. PurL transfers the ammonia molecule to FGAR to form FGAM in an ATP-dependent manner. PurS interacts with PurQ and PurL and is thought to assist in the transfer of the ammonia molecule from PurQ to PurL. This Synechococcus sp. (strain CC9605) protein is Phosphoribosylformylglycinamidine synthase subunit PurQ.